The chain runs to 71 residues: Small ribosomal subunit protein bS21 (71 aa).

The segment at 43–71 (TERKRAKASAVKRHAKKLARENARRTRLY) is disordered. The span at 46–59 (KRAKASAVKRHAKK) shows a compositional bias: basic residues. A compositionally biased stretch (basic and acidic residues) spans 60–71 (LARENARRTRLY).

Belongs to the bacterial ribosomal protein bS21 family.

The polypeptide is Small ribosomal subunit protein bS21 (Edwardsiella ictaluri (strain 93-146)).